Consider the following 245-residue polypeptide: Probable metal transport system ATP-binding protein CPn_0542/CP_0210/CPj0542/CpB0563 (245 aa).

The ABC transporter domain occupies 5-240; it reads ILAEGLAFRY…CCHPYKNQEF (236 aa). 39–46 is an ATP binding site; the sequence is GPNGGGKS.

The protein belongs to the ABC transporter superfamily.

It is found in the cell inner membrane. Its function is as follows. Part of an ATP-driven transport system CPn0541/CPn0542/CPn0543 for a metal. Probably responsible for energy coupling to the transport system. This is Probable metal transport system ATP-binding protein CPn_0542/CP_0210/CPj0542/CpB0563 from Chlamydia pneumoniae (Chlamydophila pneumoniae).